The primary structure comprises 294 residues: MALTGTDRVKRGMAEMQKGGVIMDVVNAEQAKIAEAAGAVAVMALERVPADIRAAGGVARMADPTVIEEVMNAVSIPVMAKVRIGHYVEARVLEALGVDYIDESEVLTPADEEFHIDKRQFTVPFVCGCRDLGEAARRIAEGASMLRTKGEPGTGNIVEAVRHMRKVNAQIRKVVNMSEDELVAEAKQLGAPVEVLREIKRLGRLPVVNFAAGGVATPADAALMMHLGADGVFVGSGIFKSENPEKYARAIVEATTHYEDYELIAHLSKGLGGAMRGIDIATLLPEHRMQERGW.

Aspartate 24 contacts D-ribose 5-phosphate. The Schiff-base intermediate with D-ribose 5-phosphate role is filled by lysine 81. Glycine 153 is a binding site for D-ribose 5-phosphate. Arginine 165 is a binding site for D-glyceraldehyde 3-phosphate. D-ribose 5-phosphate contacts are provided by residues glycine 214 and 235-236; that span reads GS.

It belongs to the PdxS/SNZ family. In terms of assembly, homohexamer and homododecamer. In the presence of PdxT, forms a dodecamer of heterodimers.

The enzyme catalyses aldehydo-D-ribose 5-phosphate + D-glyceraldehyde 3-phosphate + L-glutamine = pyridoxal 5'-phosphate + L-glutamate + phosphate + 3 H2O + H(+). Its pathway is cofactor biosynthesis; pyridoxal 5'-phosphate biosynthesis. In terms of biological role, catalyzes the formation of pyridoxal 5'-phosphate from ribose 5-phosphate (RBP), glyceraldehyde 3-phosphate (G3P) and ammonia. The ammonia is provided by the PdxT subunit. Can also use ribulose 5-phosphate and dihydroxyacetone phosphate as substrates, resulting from enzyme-catalyzed isomerization of RBP and G3P, respectively. The sequence is that of Pyridoxal 5'-phosphate synthase subunit PdxS from Geobacillus kaustophilus (strain HTA426).